The primary structure comprises 1530 residues: Multidrug resistance-associated protein 1 (1530 aa).

Over 1–33 the chain is Extracellular; it reads MALRDFCSVDGSDLFWEWNVTWNTSNPDFTKCF. Asn-19 is a glycosylation site (N-linked (GlcNAc...) asparagine). The chain crosses the membrane as a helical span at residues 34–54; it reads QNTVLVWVPCSYLWVCFPFYF. Residues 55-74 are Cytoplasmic-facing; it reads LYLSHHDRGYIQMTHLNKAK. Residues 75–95 traverse the membrane as a helical segment; the sequence is TALGFLLWIVCWADLFYSFWE. Over 96–100 the chain is Extracellular; it reads RSMGK. The helical transmembrane segment at 101-121 threads the bilayer; sequence LLAPVFLVSPTLLGITMLLAT. The Cytoplasmic portion of the chain corresponds to 122-133; the sequence is FLIQIERRRGVQ. A helical transmembrane segment spans residues 134-154; it reads SSGIMLTFWLIALLCALAILR. Over 155–172 the chain is Extracellular; the sequence is SKIMTALKEDARVDVFRD. A helical transmembrane segment spans residues 173 to 193; that stretch reads VTFYIYFSLVLIQLVLSCFSD. The Cytoplasmic segment spans residues 194–316; sequence RSPLFSETIN…KERDPSLFKV (123 aa). Tyr-277 is modified (phosphotyrosine). Ser-289 is modified (phosphoserine). Residues 317 to 337 form a helical membrane-spanning segment; the sequence is LYKTFGPYFLMSFLFKAVHDL. Positions 325-608 constitute an ABC transmembrane type-1 1 domain; it reads FLMSFLFKAV…LPMVISSIVQ (284 aa). Over 338–363 the chain is Extracellular; the sequence is MMFAGPEILKLLINFVNDKKAPEWQG. The chain crosses the membrane as a helical span at residues 364–384; that stretch reads YFYTALLFISACLQTLVLHQY. Over 385 to 440 the chain is Cytoplasmic; the sequence is FHICFVSGMRIKTAVIGAVYRKALVITNAARKSSTVGEIVNLMSVDAQRFMDLATY. The chain crosses the membrane as a helical span at residues 441–461; it reads INMIWSAPLQVILALYLLWLN. Over 462-464 the chain is Extracellular; sequence LGP. The chain crosses the membrane as a helical span at residues 465 to 485; that stretch reads SVLAGVAVMVLMVPLNAVMAM. At 486-547 the chain is on the cytoplasmic side; it reads KTKTYQVAHM…VLKKSAYLAA (62 aa). Position 503 is an N6-succinyllysine (Lys-503). The helical transmembrane segment at 548-568 threads the bilayer; the sequence is VGTFTWVCTPFLVALSTFAVY. At 569–590 the chain is on the extracellular side; it reads VTVDENNILDAQKAFVSLALFN. Residues 591–611 traverse the membrane as a helical segment; the sequence is ILRFPLNILPMVISSIVQASV. At 612-966 the chain is on the cytoplasmic side; that stretch reads SLKRLRVFLS…VKLSVYWDYM (355 aa). The ABC transporter 1 domain occupies 644-868; sequence ITVKNATFTW…DGAFAEFLRT (225 aa). 678–685 is an ATP binding site; the sequence is GQVGCGKS. Positions 912-939 are disordered; that stretch reads RQLSSSSSYSRDVSQHHTSTAELRKPGP. 2 positions are modified to phosphoserine: Ser-915 and Ser-930. The chain crosses the membrane as a helical span at residues 967-987; sequence KAIGLFISFLSIFLFLCNHVA. In terms of domain architecture, ABC transmembrane type-1 2 spans 974-1255; sequence SFLSIFLFLC…LVRMSSEMET (282 aa). The Extracellular portion of the chain corresponds to 988-1024; it reads SLVSNYWLSLWTDDPIVNGTQEHTQVRLSVYGALGIS. A glycan (N-linked (GlcNAc...) asparagine) is linked at Asn-1005. Residues 1025–1045 traverse the membrane as a helical segment; sequence QGITVFGYSMAVSIGGIFASR. Topologically, residues 1046 to 1088 are cytoplasmic; it reads RLHLDLLHNVLRSPISFFERTPSGNLVNRFSKELDTVDSMIPQ. Residues 1089 to 1109 traverse the membrane as a helical segment; the sequence is VIKMFMGSLFNVIGACIIILL. A topological domain (extracellular) is located at residue Ala-1110. The chain crosses the membrane as a helical span at residues 1111–1131; sequence TPMAAVIIPPLGLIYFFVQRF. Over 1132–1202 the chain is Cytoplasmic; sequence YVASSRQLKR…VANRWLAVRL (71 aa). The helical transmembrane segment at 1203-1223 threads the bilayer; the sequence is ECVGNCIVLFASLFAVISRHS. Over 1224-1225 the chain is Extracellular; that stretch reads LS. Residues 1226–1246 form a helical membrane-spanning segment; sequence AGLVGLSVSYSLQVTTYLNWL. Residues 1247–1530 are Cytoplasmic-facing; sequence VRMSSEMETN…YSMAKDSGLV (284 aa). The ABC transporter 2 domain maps to 1292–1526; the sequence is VEFRDYGLRY…RGLFYSMAKD (235 aa). 1326–1333 is a binding site for ATP; the sequence is GRTGAGKS.

It belongs to the ABC transporter superfamily. ABCC family. Conjugate transporter (TC 3.A.1.208) subfamily. As to expression, expressed in heart, spleen, lung, kidney, skeletal muscle, mammary gland and weaker in brain and liver.

The protein resides in the cell membrane. It localises to the basolateral cell membrane. The catalysed reaction is ATP + H2O + xenobioticSide 1 = ADP + phosphate + xenobioticSide 2.. The enzyme catalyses an S-substituted glutathione(in) + ATP + H2O = an S-substituted glutathione(out) + ADP + phosphate + H(+). It catalyses the reaction sphing-4-enine 1-phosphate(in) + ATP + H2O = sphing-4-enine 1-phosphate(out) + ADP + phosphate + H(+). It carries out the reaction leukotriene C4(in) + ATP + H2O = leukotriene C4(out) + ADP + phosphate + H(+). The catalysed reaction is 17beta-estradiol 17-O-(beta-D-glucuronate)(in) + ATP + H2O = 17beta-estradiol 17-O-(beta-D-glucuronate)(out) + ADP + phosphate + H(+). The enzyme catalyses daunorubicin(in) + ATP + H2O = daunorubicin(out) + ADP + phosphate + H(+). It catalyses the reaction vincristine(in) + ATP + H2O = vincristine(out) + ADP + phosphate + H(+). It carries out the reaction 2',3'-cGAMP(in) + ATP + H2O = 2',3'-cGAMP(out) + ADP + phosphate + H(+). The catalysed reaction is S-[(2E,6E,10E)-geranylgeranyl]-L-glutathione(in) + ATP + H2O = S-[(2E,6E,10E)-geranylgeranyl]-L-glutathione(out) + ADP + phosphate + H(+). The enzyme catalyses prostaglandin A2-S-(R)-glutathione(in) + ATP + H2O = prostaglandin A2-S-(R)-glutathione(out) + ADP + phosphate + H(+). It catalyses the reaction prostaglandin A2-S-(S)-glutathione(in) + ATP + H2O = prostaglandin A2-S-(S)-glutathione(out) + ADP + phosphate + H(+). MK 571 inhibits sphingosine 1-phosphate and leukotriene C4 export. Functionally, mediates export of organic anions and drugs from the cytoplasm. Mediates ATP-dependent transport of glutathione and glutathione conjugates, leukotriene C4, estradiol-17-beta-o-glucuronide, methotrexate, antiviral drugs and other xenobiotics. Confers resistance to anticancer drugs by decreasing accumulation of drug in cells, and by mediating ATP- and GSH-dependent drug export. Hydrolyzes ATP with low efficiency. Catalyzes the export of sphingosine 1-phosphate from mast cells independently of their degranulation. Participates in inflammatory response by allowing export of leukotriene C4 from leukotriene C4-synthesizing cells. Mediates ATP-dependent, GSH-independent cyclic GMP-AMP (cGAMP) export. Thus, by limiting intracellular cGAMP concentrations negatively regulates the cGAS-STING pathway. Exports S-geranylgeranyl-glutathione (GGG) in lymphoid cells and stromal compartments of lymphoid organs. ABCC1 (via extracellular transport) with GGT5 (via GGG catabolism) establish GGG gradients within lymphoid tissues to position P2RY8-positive lymphocytes at germinal centers in lymphoid follicles and restrict their chemotactic transmigration from blood vessels to the bone marrow parenchyma. Mediates basolateral export of GSH-conjugated R- and S-prostaglandin A2 diastereomers in polarized epithelial cells. This Bos taurus (Bovine) protein is Multidrug resistance-associated protein 1.